The following is a 778-amino-acid chain: Aconitate hydratase, mitochondrial (778 aa).

The transit peptide at M1–L16 directs the protein to the mitochondrion. Residues Q95 and D188 to H190 contribute to the substrate site. Position 382 (C382) interacts with [4Fe-4S] cluster. A Phosphoserine modification is found at S391. At T409 the chain carries Phosphothreonine. C445 and C448 together coordinate [4Fe-4S] cluster. 2 residues coordinate substrate: R471 and R476. S556 bears the Phosphoserine mark. Substrate is bound by residues R604 and S667–R668.

It belongs to the aconitase/IPM isomerase family. In terms of assembly, monomer. Binds to mitochondrial DNA (mtDNA) and identified as component of mitochondrial nucleoids. Requires [4Fe-4S] cluster as cofactor.

It localises to the mitochondrion. Its subcellular location is the cytoplasm. It catalyses the reaction citrate = D-threo-isocitrate. It participates in carbohydrate metabolism; tricarboxylic acid cycle; isocitrate from oxaloacetate: step 2/2. Subject to catabolite regulation. Its function is as follows. Catalyzes the isomerization of citrate to isocitrate via cis-aconitate, a step in the citric acid cycle. Can also provide minor contributions to the reversible dehydration of (R)-homocitrate to cis-homoaconitate, a step in the alpha-aminoadipate pathway for lysine biosynthesis. Also plays an essential role in mtDNA maintenance. May directly protect mtDNA from accumulation of point mutations and ssDNA breaks as a component of mitochondrial nucleoids, or by preventing accumulation of iron citrate thereby alleviating its detrimental effects in mitochondria. This is Aconitate hydratase, mitochondrial from Saccharomyces cerevisiae (strain ATCC 204508 / S288c) (Baker's yeast).